Consider the following 419-residue polypeptide: MDKFRVQGPTKLQGEVTISGAKNAALPILFAALLAEEPVEIQNVPKLKDVDTSMKLLSQLGAKVERNGSVHIDARDVNVFCAPYDLVKTMRASIWALGPLVARFGQGQVSLPGGCTIGARPVDLHISGLEQLGATIKLEEGYVKASVDGRLKGAHIVMDKVSVGATVTIMCAATLAEGTTIIENAAREPEIVDTANFLITLGAKISGQGTDRIVIEGVERLGGGVYRVLPDRIETGTFLVAAAISRGKIICRNAQPDTLDAVLAKLRDAGADIEVGEDWISLDMHGKRPKAVNVRTAPHPAFPTDMQAQFTLLNLVAEGTGFITETVFENRFMHVPELSRMGAHAEIESNTVICHGVEKLSGAQVMATDLRASASLVLAGCIAEGTTVVDRIYHIDRGYERIEDKLRALGANIERVKGE.

Position 22 to 23 (22 to 23 (KN)) interacts with phosphoenolpyruvate. Residue arginine 91 coordinates UDP-N-acetyl-alpha-D-glucosamine. Cysteine 115 serves as the catalytic Proton donor. Cysteine 115 bears the 2-(S-cysteinyl)pyruvic acid O-phosphothioketal mark. Residues 120–124 (RPVDL), 160–163 (KVSV), aspartate 305, and valine 327 contribute to the UDP-N-acetyl-alpha-D-glucosamine site.

Belongs to the EPSP synthase family. MurA subfamily.

Its subcellular location is the cytoplasm. It catalyses the reaction phosphoenolpyruvate + UDP-N-acetyl-alpha-D-glucosamine = UDP-N-acetyl-3-O-(1-carboxyvinyl)-alpha-D-glucosamine + phosphate. It functions in the pathway cell wall biogenesis; peptidoglycan biosynthesis. Cell wall formation. Adds enolpyruvyl to UDP-N-acetylglucosamine. The protein is UDP-N-acetylglucosamine 1-carboxyvinyltransferase of Shigella sonnei (strain Ss046).